A 194-amino-acid chain; its full sequence is Peptidyl-tRNA hydrolase (194 aa).

TRNA is bound at residue Y19. Residue H24 is the Proton acceptor of the active site. TRNA is bound by residues F69, N71, and N117.

The protein belongs to the PTH family. As to quaternary structure, monomer.

Its subcellular location is the cytoplasm. It catalyses the reaction an N-acyl-L-alpha-aminoacyl-tRNA + H2O = an N-acyl-L-amino acid + a tRNA + H(+). Its function is as follows. Hydrolyzes ribosome-free peptidyl-tRNAs (with 1 or more amino acids incorporated), which drop off the ribosome during protein synthesis, or as a result of ribosome stalling. In terms of biological role, catalyzes the release of premature peptidyl moieties from peptidyl-tRNA molecules trapped in stalled 50S ribosomal subunits, and thus maintains levels of free tRNAs and 50S ribosomes. The sequence is that of Peptidyl-tRNA hydrolase from Neorickettsia sennetsu (strain ATCC VR-367 / Miyayama) (Ehrlichia sennetsu).